The primary structure comprises 35 residues: Photosystem II reaction center protein T (35 aa).

The chain crosses the membrane as a helical span at residues 3–23; it reads ALVYTFLLVGTLGIIFFAIFF.

This sequence belongs to the PsbT family. In terms of assembly, PSII is composed of 1 copy each of membrane proteins PsbA, PsbB, PsbC, PsbD, PsbE, PsbF, PsbH, PsbI, PsbJ, PsbK, PsbL, PsbM, PsbT, PsbY, PsbZ, Psb30/Ycf12, at least 3 peripheral proteins of the oxygen-evolving complex and a large number of cofactors. It forms dimeric complexes.

The protein localises to the plastid. Its subcellular location is the chloroplast thylakoid membrane. Its function is as follows. Found at the monomer-monomer interface of the photosystem II (PS II) dimer, plays a role in assembly and dimerization of PSII. PSII is a light-driven water plastoquinone oxidoreductase, using light energy to abstract electrons from H(2)O, generating a proton gradient subsequently used for ATP formation. The polypeptide is Photosystem II reaction center protein T (Marchantia polymorpha (Common liverwort)).